Here is a 106-residue protein sequence, read N- to C-terminus: Trp operon repressor homolog (106 aa).

The DNA-binding element occupies glutamine 59–isoleucine 82.

The protein belongs to the TrpR family. Homodimer.

The protein localises to the cytoplasm. In terms of biological role, this protein is an aporepressor. When complexed with L-tryptophan it binds the operator region of the trp operon and prevents the initiation of transcription. This Histophilus somni (strain 129Pt) (Haemophilus somnus) protein is Trp operon repressor homolog.